The chain runs to 476 residues: MKILFVAAEGAPFSKTGGLGDVIGALPKSLVKHGHQVGVILPYYDMTDAKFGDQVEDLFYFEVSVGWRRQYVGVKRLVLNGVSFYFIDNQHYFFRGHVYGDFDDGERFAYFQLAAVELMERIDFIPDVLHVHDYHTAMIPFLVKEKYHWIQAYRNIKTVLTIHNLEFQGQFPDSMLWELFGVGYERYADGTLRWNDCLNWMKAGILYADRVTTVSPSYAGEIRTPEFGCNLDQILRMESGKLVGIVNGIDTEIYNPETDPLLAHHFDKSDLSGKLENKRALQERVGLPVRDDVPLVGIVSRLTRQKGFDLVVEELHNFLQQDVQIILLGTGDPAFEQAFAWFGQAYPDKLSANILFDVGLAQEIYAASDIFLMPSRFEPCGLSQMMAMRYGTLPLVHEVGGLRDTVEPYNVYTGQGTGFSFNNFSGYWLSWTFKEALNLYTHDKEAWKSMQEQAMERDFSWDTASLAYSDLYQSLL.

Residue Lys15 participates in ADP-alpha-D-glucose binding.

It belongs to the glycosyltransferase 1 family. Bacterial/plant glycogen synthase subfamily.

The enzyme catalyses [(1-&gt;4)-alpha-D-glucosyl](n) + ADP-alpha-D-glucose = [(1-&gt;4)-alpha-D-glucosyl](n+1) + ADP + H(+). The protein operates within glycan biosynthesis; glycogen biosynthesis. Its function is as follows. Synthesizes alpha-1,4-glucan chains using ADP-glucose. The chain is Glycogen synthase from Streptococcus gordonii (strain Challis / ATCC 35105 / BCRC 15272 / CH1 / DL1 / V288).